The chain runs to 388 residues: Deoxyguanosinetriphosphate triphosphohydrolase-like protein (388 aa).

The disordered stretch occupies residues 1–32 (MSVGMAAPRAPYSCDPDRSRGRLFAEPPSRTR). The HD domain maps to 69-205 (RLTHSLEVAQ…AALADDIAYD (137 aa)).

It belongs to the dGTPase family. Type 2 subfamily.

This Bradyrhizobium sp. (strain ORS 278) protein is Deoxyguanosinetriphosphate triphosphohydrolase-like protein.